A 313-amino-acid chain; its full sequence is MAGRSRYDNPFEEGGGDEVNPFADKASKGGSAGQSSYSGGAFYTTQSRPSAPPATHLSPLPPEPADFYNDFSTPVDIPMDTSKDMKTREKELLAKEAELNRREKEIKRREEAAARAGIVLEDKNWPPFFPIIHNDIGNEIPVHLQRTQYVAFASLLGLVLCLFWNIICVTAAWIKGEGPKIWFLAVIYFILGCPGAYYLWYRPLYRAMRNESALKFGWFFLFYLVHIAFCVYAAVSPSILFVGKSLTGIFPAISLIGNTVIVGVFYFLGFAMFCLESLLSMWVIQRVYLYFRGSGKEAEMKREAARSAARAAF.

The tract at residues Met-1–Asn-69 is disordered. Topologically, residues Met-1–Gln-148 are cytoplasmic. Residues Met-85–Ala-116 adopt a coiled-coil conformation. 4 consecutive transmembrane segments (helical) span residues Tyr-149–Val-169, Ile-181–Tyr-201, Phe-216–Ser-236, and Leu-255–Leu-275. The Cytoplasmic portion of the chain corresponds to Glu-276 to Phe-313.

The protein belongs to the SCAMP family.

The protein localises to the cell membrane. It localises to the cytoplasmic vesicle. It is found in the secretory vesicle membrane. In terms of biological role, probably involved in membrane trafficking. The chain is Secretory carrier-associated membrane protein 4 (SCAMP4) from Oryza sativa subsp. japonica (Rice).